We begin with the raw amino-acid sequence, 296 residues long: Claudin-23 (296 aa).

Topologically, residues 1-2 are cytoplasmic; sequence MR. Residues 3–23 traverse the membrane as a helical segment; it reads TPVVMTLGMVLTPCGLLLNLV. Residues 24–81 lie on the Extracellular side of the membrane; it reads STLAPGWRLVKGFLDQPVDVVLYQGLWDICREQSSRERECGQPDEWNYFQTQPVQVAR. A helical transmembrane segment spans residues 82-102; the sequence is GLMITSLATTALGLLLASLGV. At 103-111 the chain is on the cytoplasmic side; that stretch reads RCWQDEPHY. A helical membrane pass occupies residues 112 to 132; that stretch reads GLAGLSGVVFFVAGLFSLIPV. The Extracellular portion of the chain corresponds to 133–160; that stretch reads SWYNHFLSDPDVLAAPSSPVTVQVSYSL. Residues 161–181 traverse the membrane as a helical segment; it reads VLGYLGSCLLLLGGFSLALSF. Over 182 to 296 the chain is Cytoplasmic; sequence APWCEERCRR…QNSLPCDSDL (115 aa). The interval 224 to 296 is disordered; that stretch reads YSDGQHRPPP…QNSLPCDSDL (73 aa). The span at 273 to 284 shows a compositional bias: low complexity; it reads TSQGGSSSRSTR. The span at 285 to 296 shows a compositional bias: polar residues; the sequence is PCQNSLPCDSDL.

The protein belongs to the claudin family.

It is found in the cell junction. Its subcellular location is the tight junction. It localises to the cell membrane. Plays a major role in tight junction-specific obliteration of the intercellular space, through calcium-independent cell-adhesion activity. The polypeptide is Claudin-23 (Cldn23) (Mus musculus (Mouse)).